Reading from the N-terminus, the 405-residue chain is Arginine biosynthesis bifunctional protein ArgJ (405 aa).

Threonine 152, lysine 178, threonine 189, glutamate 276, asparagine 400, and serine 405 together coordinate substrate. The active-site Nucleophile is the threonine 189.

The protein belongs to the ArgJ family. In terms of assembly, heterotetramer of two alpha and two beta chains.

The protein resides in the cytoplasm. It catalyses the reaction N(2)-acetyl-L-ornithine + L-glutamate = N-acetyl-L-glutamate + L-ornithine. The catalysed reaction is L-glutamate + acetyl-CoA = N-acetyl-L-glutamate + CoA + H(+). The protein operates within amino-acid biosynthesis; L-arginine biosynthesis; L-ornithine and N-acetyl-L-glutamate from L-glutamate and N(2)-acetyl-L-ornithine (cyclic): step 1/1. Its pathway is amino-acid biosynthesis; L-arginine biosynthesis; N(2)-acetyl-L-ornithine from L-glutamate: step 1/4. Its function is as follows. Catalyzes two activities which are involved in the cyclic version of arginine biosynthesis: the synthesis of N-acetylglutamate from glutamate and acetyl-CoA as the acetyl donor, and of ornithine by transacetylation between N(2)-acetylornithine and glutamate. This Chromobacterium violaceum (strain ATCC 12472 / DSM 30191 / JCM 1249 / CCUG 213 / NBRC 12614 / NCIMB 9131 / NCTC 9757 / MK) protein is Arginine biosynthesis bifunctional protein ArgJ.